A 386-amino-acid polypeptide reads, in one-letter code: Synaptotagmin-5 (386 aa).

Positions M1–P16 are enriched in pro residues. Residues M1–R21 form a disordered region. The Vesicular portion of the chain corresponds to M1–Q24. A helical membrane pass occupies residues G25–S45. At S46–P386 the chain is on the cytoplasmic side. C2 domains lie at Q108–R227 and K239–H372. Ca(2+) is bound by residues L138, D139, D145, D197, F198, D199, S202, D205, D270, D276, D330, and D332.

This sequence belongs to the synaptotagmin family. As to quaternary structure, homodimer. Interacts with both alpha- and beta-tubulin. The cofactor is Ca(2+).

The protein resides in the cytoplasmic vesicle. It is found in the secretory vesicle. The protein localises to the synaptic vesicle membrane. Its subcellular location is the recycling endosome membrane. In terms of biological role, may be involved in Ca(2+)-dependent exocytosis of secretory vesicles through Ca(2+) and phospholipid binding to the C2 domain or may serve as Ca(2+) sensors in the process of vesicular trafficking and exocytosis. Regulates the Ca(2+)-dependent secretion of norepinephrine in PC12 cells. Required for export from the endocytic recycling compartment to the cell surface. The sequence is that of Synaptotagmin-5 (Syt5) from Mus musculus (Mouse).